Consider the following 757-residue polypeptide: GTPase-activating protein GYP7 (757 aa).

The region spanning 395–640 (GLEDCIRGEA…SLWEILWTDY (246 aa)) is the Rab-GAP TBC domain. The disordered stretch occupies residues 482–507 (GVGSDRLPTTRESSPETPDEADDDEF). Positions 498-507 (TPDEADDDEF) are enriched in acidic residues.

Its function is as follows. Most effectively accelerate the intrinsic GTPase activity of YPT7. It is also active, but to a lesser extent, on YPT31, YPT32 and YPT1. YPT6 and SEC4. The polypeptide is GTPase-activating protein GYP7 (GYP7) (Debaryomyces hansenii (strain ATCC 36239 / CBS 767 / BCRC 21394 / JCM 1990 / NBRC 0083 / IGC 2968) (Yeast)).